The chain runs to 179 residues: Large ribosomal subunit protein uL5 (179 aa).

Belongs to the universal ribosomal protein uL5 family. Part of the 50S ribosomal subunit; part of the 5S rRNA/L5/L18/L25 subcomplex. Contacts the 5S rRNA and the P site tRNA. Forms a bridge to the 30S subunit in the 70S ribosome.

Its function is as follows. This is one of the proteins that bind and probably mediate the attachment of the 5S RNA into the large ribosomal subunit, where it forms part of the central protuberance. In the 70S ribosome it contacts protein S13 of the 30S subunit (bridge B1b), connecting the 2 subunits; this bridge is implicated in subunit movement. Contacts the P site tRNA; the 5S rRNA and some of its associated proteins might help stabilize positioning of ribosome-bound tRNAs. The chain is Large ribosomal subunit protein uL5 from Edwardsiella ictaluri (strain 93-146).